Here is a 71-residue protein sequence, read N- to C-terminus: Potassium voltage-gated channel subfamily E member 2 (71 aa).

A helical membrane pass occupies residues 7-27; that stretch reads VILYLMVMIGMFSFIIVAILV. The Cytoplasmic segment spans residues 28 to 71; the sequence is STVKSKRREHSNDPYHQYIVEDWQEKYKSQILHFEEAKATIHEN.

This sequence belongs to the potassium channel KCNE family. In terms of assembly, interacts with KCNB1. Associates with KCNH2/ERG1. May associate with KCNQ2 and KCNQ3. Associates with HCN1 and probably HCN2. Heteromultimer with KCNC2. Interacts with KCNC2. Interacts with KCNQ1; forms a heterooligomer complex that targets to the membrane raft and leading to currents with an apparently instantaneous activation, a rapid deactivation process and a linear current-voltage relationship and decreases the amplitude of the outward current. Detected in heart; expression is highest in the SA node and the right atrium, and barely detectable in the ventricle.

Its subcellular location is the cell membrane. It is found in the apical cell membrane. Its function is as follows. Ancillary protein that functions as a regulatory subunit of the voltage-gated potassium (Kv) channel complex composed of pore-forming and potassium-conducting alpha subunits and of regulatory beta subunits. KCNE2 beta subunit modulates the gating kinetics and enhances stability of the channel complex. Alters the gating of the delayed rectifier Kv channel containing KCNB1 alpha subunit. Associates with KCNH2/HERG alpha subunit Kv channel to form the rapidly activating component of the delayed rectifying potassium current (IKr) in heart. May associate with KCNQ2 and/or KCNQ3 alpha subunits to modulate the native M-type current. May associate with HCN1 and HCN2 channel subunits to increase potassium current. Forms a heterooligomer complex with KCNQ1/KVLQT1 alpha subunits which leads to currents with an apparently instantaneous activation, a rapid deactivation process and a linear current-voltage relationship and decreases the amplitude of the outward current. KCNQ1-KCNE2 channel associates with Na(+)-coupled myo-inositol symporter in the apical membrane of choroid plexus epithelium and regulates the myo-inositol gradient between blood and cerebrospinal fluid with an impact on neuron excitability. This is Potassium voltage-gated channel subfamily E member 2 (KCNE2) from Oryctolagus cuniculus (Rabbit).